Here is a 644-residue protein sequence, read N- to C-terminus: MKYILVTGGVISGVGKGVIASSFGTLLKSCQLDVTSIKIDPYINIDAGTFSPYEHGEVYVLDDGAEVDLDLGNYERFLDITLHRDNNITTGKIYKLVIEKERTGEYLGKTVQVVPHITDAIQEWVERVAQTPVQGSSKPQVCIIELGGTIGDIEGMPFVEAFRQFQFRVKRENFCVAHVSLVPLPKATGEPKTKPTQSSVRELRGCGLSPDLIVCRSEKPIGLEVKEKISNFCHVGPDQVICIHDLNSIYHVPLLMEQNGVIEYLNERLQLNIDMSKRTKCLQHWRDLARRTETVRREVSIAIVGKYTKFADSYASVVKALQHAALAANRKLVLVFIESCQLEQETLVSEPSKYHKEWQRLCDSDGILVPGGFGSRGMEGKIRACRWARENQKPMLGICLGLQAAVIEFARNKLGLKDANTTEIDPQTGNALVIDMPEHHTGQLGGTMRLGKRTTVFSEGCTSIIRQLYGNPKSIEERHRHRYEVNPKYVPQLEEHGMRFVATDVDKTRMEIIELRDHPYFVATQYHPEYLSRPLKPSPPFLGLILASVDRLPQYIQRGCRLSPRQLSDASSDEEETYVGATKLMKSLQITGTTTPTNGISRNACRSSNSSTISTVSSDIEGACGGVGVGPTTTNGHGEDIGKE.

The Glutamine amidotransferase type-1 domain occupies 300–551 (SIAIVGKYTK…LGLILASVDR (252 aa)). Active-site for GATase activity residues include Cys399, His527, and Glu529.

It belongs to the CTP synthase family.

It carries out the reaction UTP + L-glutamine + ATP + H2O = CTP + L-glutamate + ADP + phosphate + 2 H(+). Its pathway is pyrimidine metabolism; CTP biosynthesis via de novo pathway; CTP from UDP: step 2/2. Its function is as follows. Catalyzes the ATP-dependent amination of UTP to CTP with either L-glutamine or ammonia as the source of nitrogen. Constitutes the rate-limiting enzyme in the synthesis of cytosine nucleotides. The chain is CTP synthase from Drosophila pseudoobscura pseudoobscura (Fruit fly).